Here is a 156-residue protein sequence, read N- to C-terminus: Small ribosomal subunit protein uS7 (156 aa).

Belongs to the universal ribosomal protein uS7 family. Part of the 30S ribosomal subunit. Contacts proteins S9 and S11.

Functionally, one of the primary rRNA binding proteins, it binds directly to 16S rRNA where it nucleates assembly of the head domain of the 30S subunit. Is located at the subunit interface close to the decoding center, probably blocks exit of the E-site tRNA. The polypeptide is Small ribosomal subunit protein uS7 (Cupriavidus metallidurans (strain ATCC 43123 / DSM 2839 / NBRC 102507 / CH34) (Ralstonia metallidurans)).